A 376-amino-acid chain; its full sequence is MAQKQKCVAMLLAGGKGSRLSALTKNLAKPAVPFGGKYRIIDFTLSNCANSGIETVGILTQYQPLELHNYIGIGNAWDLDRVSGGVTVLPPYAESSGVKWYTGTASAIYQNLNYLSQYEPEYVLILSGDHIYKMDYSKMLDYHIEKESDVSISVIEVPWDEASRFGIMNTNEEMEIVEFEEKPQFPRSNLASMGIYIFNWSILKEYLEMDARNPESSNDFGKDVLPLLLDEGKKLMAYPFEGYWKDVGTVKSLWEANMDLLRDETSLNLNDRNWRIYSVNPNEPPQYIAEKAKVEESLINEGCVIEGDVKHSVLFQGVTVEEGSMVIDSVVMPGAKIGKNVVIERAIVGSEMVIEDGTIIRPEKNVDDVVLIAEGK.

Alpha-D-glucose 1-phosphate is bound by residues Tyr101, Gly166, 181–182 (EK), and Ser192.

Belongs to the bacterial/plant glucose-1-phosphate adenylyltransferase family. Homotetramer.

It catalyses the reaction alpha-D-glucose 1-phosphate + ATP + H(+) = ADP-alpha-D-glucose + diphosphate. It functions in the pathway glycan biosynthesis; glycogen biosynthesis. In terms of biological role, involved in the biosynthesis of ADP-glucose, a building block required for the elongation reactions to produce glycogen. Catalyzes the reaction between ATP and alpha-D-glucose 1-phosphate (G1P) to produce pyrophosphate and ADP-Glc. The sequence is that of Glucose-1-phosphate adenylyltransferase from Bacillus cereus (strain ATCC 14579 / DSM 31 / CCUG 7414 / JCM 2152 / NBRC 15305 / NCIMB 9373 / NCTC 2599 / NRRL B-3711).